Reading from the N-terminus, the 305-residue chain is Aspartate carbamoyltransferase catalytic subunit (305 aa).

Positions 60 and 61 each coordinate carbamoyl phosphate. Lys-88 is an L-aspartate binding site. Carbamoyl phosphate contacts are provided by Arg-110, His-138, and Gln-141. Residues Arg-171 and Arg-222 each contribute to the L-aspartate site. Residues Ala-263 and Pro-264 each coordinate carbamoyl phosphate.

It belongs to the aspartate/ornithine carbamoyltransferase superfamily. ATCase family. Heterododecamer (2C3:3R2) of six catalytic PyrB chains organized as two trimers (C3), and six regulatory PyrI chains organized as three dimers (R2).

It carries out the reaction carbamoyl phosphate + L-aspartate = N-carbamoyl-L-aspartate + phosphate + H(+). It functions in the pathway pyrimidine metabolism; UMP biosynthesis via de novo pathway; (S)-dihydroorotate from bicarbonate: step 2/3. In terms of biological role, catalyzes the condensation of carbamoyl phosphate and aspartate to form carbamoyl aspartate and inorganic phosphate, the committed step in the de novo pyrimidine nucleotide biosynthesis pathway. This chain is Aspartate carbamoyltransferase catalytic subunit, found in Halalkalibacterium halodurans (strain ATCC BAA-125 / DSM 18197 / FERM 7344 / JCM 9153 / C-125) (Bacillus halodurans).